Consider the following 306-residue polypeptide: Armadillo repeat-containing protein 10 (306 aa).

A helical transmembrane segment spans residues 7-29 (VGWVAAGLVLGAGACYCIYRLTR). The residue at position 43 (Ser-43) is a Phosphoserine. Thr-48 carries the phosphothreonine modification. The stretch at 101-143 (GGIPIVGNKINSLNQSIKEKALNALNNLSVNVENQTKIKIYVP) is one ARM repeat.

In terms of assembly, interacts with the DNA-binding domain of p53/TP53.

The protein localises to the endoplasmic reticulum membrane. It localises to the mitochondrion outer membrane. May play a role in cell survival and cell growth. May suppress the transcriptional activity of p53/TP53. This chain is Armadillo repeat-containing protein 10 (Armc10), found in Mus musculus (Mouse).